Consider the following 335-residue polypeptide: Holliday junction branch migration complex subunit RuvB (335 aa).

The segment at 1–181 (MDRIVEIEKY…FGMQFRLEFY (181 aa)) is large ATPase domain (RuvB-L). Leucine 20 serves as a coordination point for ATP. ADP contacts are provided by arginine 21, tyrosine 28, isoleucine 29, glycine 62, leucine 63, glycine 64, lysine 65, threonine 66, and threonine 67. ATP is bound by residues 128–130 (EDY) and arginine 171. Residues tyrosine 181 and arginine 218 each coordinate ADP. Residues 182 to 252 (KDSELALILQ…RANEALNSLG (71 aa)) form a small ATPAse domain (RuvB-S) region. The tract at residues 255–335 (ELGFDAMDLR…LNYEKTLFEE (81 aa)) is head domain (RuvB-H). DNA is bound by residues arginine 309 and arginine 314.

It belongs to the RuvB family. As to quaternary structure, homohexamer. Forms an RuvA(8)-RuvB(12)-Holliday junction (HJ) complex. HJ DNA is sandwiched between 2 RuvA tetramers; dsDNA enters through RuvA and exits via RuvB. An RuvB hexamer assembles on each DNA strand where it exits the tetramer. Each RuvB hexamer is contacted by two RuvA subunits (via domain III) on 2 adjacent RuvB subunits; this complex drives branch migration. In the full resolvosome a probable DNA-RuvA(4)-RuvB(12)-RuvC(2) complex forms which resolves the HJ.

It localises to the cytoplasm. It catalyses the reaction ATP + H2O = ADP + phosphate + H(+). Functionally, the RuvA-RuvB-RuvC complex processes Holliday junction (HJ) DNA during genetic recombination and DNA repair, while the RuvA-RuvB complex plays an important role in the rescue of blocked DNA replication forks via replication fork reversal (RFR). RuvA specifically binds to HJ cruciform DNA, conferring on it an open structure. The RuvB hexamer acts as an ATP-dependent pump, pulling dsDNA into and through the RuvAB complex. RuvB forms 2 homohexamers on either side of HJ DNA bound by 1 or 2 RuvA tetramers; 4 subunits per hexamer contact DNA at a time. Coordinated motions by a converter formed by DNA-disengaged RuvB subunits stimulates ATP hydrolysis and nucleotide exchange. Immobilization of the converter enables RuvB to convert the ATP-contained energy into a lever motion, pulling 2 nucleotides of DNA out of the RuvA tetramer per ATP hydrolyzed, thus driving DNA branch migration. The RuvB motors rotate together with the DNA substrate, which together with the progressing nucleotide cycle form the mechanistic basis for DNA recombination by continuous HJ branch migration. Branch migration allows RuvC to scan DNA until it finds its consensus sequence, where it cleaves and resolves cruciform DNA. The protein is Holliday junction branch migration complex subunit RuvB of Campylobacter jejuni subsp. jejuni serotype O:2 (strain ATCC 700819 / NCTC 11168).